Consider the following 77-residue polypeptide: Large ribosomal subunit protein eL14 (77 aa).

This sequence belongs to the eukaryotic ribosomal protein eL14 family.

The protein is Large ribosomal subunit protein eL14 of Methanococcus maripaludis (strain C7 / ATCC BAA-1331).